The sequence spans 454 residues: tRNA modification GTPase MnmE (454 aa).

Arg-23, Glu-80, and Lys-120 together coordinate (6S)-5-formyl-5,6,7,8-tetrahydrofolate. Residues 216-377 enclose the TrmE-type G domain; it reads GMRVVIAGRP…VREHLKACIG (162 aa). K(+) is bound at residue Asn-226. GTP-binding positions include 226-231, 245-251, 270-273, and 335-338; these read NAGKSS, TEIAGTT, DTAG, and NKAD. Position 230 (Ser-230) interacts with Mg(2+). Residues Thr-245, Ile-247, and Thr-250 each coordinate K(+). Thr-251 contacts Mg(2+). A (6S)-5-formyl-5,6,7,8-tetrahydrofolate-binding site is contributed by Lys-454.

Belongs to the TRAFAC class TrmE-Era-EngA-EngB-Septin-like GTPase superfamily. TrmE GTPase family. In terms of assembly, homodimer. Heterotetramer of two MnmE and two MnmG subunits. K(+) serves as cofactor.

It localises to the cytoplasm. Exhibits a very high intrinsic GTPase hydrolysis rate. Involved in the addition of a carboxymethylaminomethyl (cmnm) group at the wobble position (U34) of certain tRNAs, forming tRNA-cmnm(5)s(2)U34. The polypeptide is tRNA modification GTPase MnmE (Pseudoalteromonas translucida (strain TAC 125)).